The sequence spans 471 residues: MNPNQKLFALSGVAIALSVLNLLIGISNVGLNVSLHLKGEGVKQENNLTCTTITQNNTTVVENTYVNNTTIINKGTNLKAPNYLLLNKSLCSVEGWVVIAKDNAIRFGESEQIIVTREPYVSCDPSGCKMYALHQGTTIRNKHSNGTIHDRTTFRGLISTPLGTPPTVSNSDFICVGWSSTSCHDGVGRMTICIQGNNDNATATVYYNRRLTTTIKTWAKNILRTQESECVCYNGTCAVVMTDGPASSQAYTKIMYFHKGLIIKEEPLRGSARHIEECSCYGHDQKVSCVCRDNWQGANRPIIEIDMSTLEHTSRCVCTGVLTDTSRPGDKPNGDCSNPITGSPGAPGVKGFGFLNGDNTWLGRTISPRSRSGFEMLKIPNAETDPNSRIIERQEIVDNSNWSGYSGSFIDCWDEANECYNPCFYVELIRGRPEEAKYVWWTSNSLIALCGSPVSVGSGSFPDGAQIQYFS.

Residues M1–K6 are Intravirion-facing. A helical transmembrane segment spans residues L7 to S27. The involved in apical transport and lipid raft association stretch occupies residues S11–V33. At N28–S471 the chain is on the virion surface side. 7 N-linked (GlcNAc...) asparagine; by host glycosylation sites follow: N32, N47, N56, N57, N67, N68, and N87. The segment at H36 to N87 is hypervariable stalk region. The interval L90 to S471 is head of neuraminidase. Intrachain disulfides connect C91/C419, C123/C128, C183/C230, C232/C237, C278/C291, C280/C289, C318/C336, and C423/C450. R117 contributes to the substrate binding site. N145 carries N-linked (GlcNAc...) asparagine; by host glycosylation. D150 functions as the Proton donor/acceptor in the catalytic mechanism. R151 serves as a coordination point for substrate. 2 N-linked (GlcNAc...) asparagine; by host glycosylation sites follow: N200 and N234. E276–E277 lines the substrate pocket. Residue R292 coordinates substrate. Ca(2+) contacts are provided by D293, G297, and D324. R371 is a substrate binding site. N401 is a glycosylation site (N-linked (GlcNAc...) asparagine; by host). Y405 (nucleophile) is an active-site residue.

The protein belongs to the glycosyl hydrolase 34 family. As to quaternary structure, homotetramer. It depends on Ca(2+) as a cofactor. In terms of processing, N-glycosylated.

Its subcellular location is the virion membrane. The protein localises to the host apical cell membrane. It carries out the reaction Hydrolysis of alpha-(2-&gt;3)-, alpha-(2-&gt;6)-, alpha-(2-&gt;8)- glycosidic linkages of terminal sialic acid residues in oligosaccharides, glycoproteins, glycolipids, colominic acid and synthetic substrates.. Its activity is regulated as follows. Inhibited by the neuraminidase inhibitors zanamivir (Relenza) and oseltamivir (Tamiflu). These drugs interfere with the release of progeny virus from infected cells and are effective against all influenza strains. Resistance to neuraminidase inhibitors is quite rare. Its function is as follows. Catalyzes the removal of terminal sialic acid residues from viral and cellular glycoconjugates. Cleaves off the terminal sialic acids on the glycosylated HA during virus budding to facilitate virus release. Additionally helps virus spread through the circulation by further removing sialic acids from the cell surface. These cleavages prevent self-aggregation and ensure the efficient spread of the progeny virus from cell to cell. Otherwise, infection would be limited to one round of replication. Described as a receptor-destroying enzyme because it cleaves a terminal sialic acid from the cellular receptors. May facilitate viral invasion of the upper airways by cleaving the sialic acid moieties on the mucin of the airway epithelial cells. Likely to plays a role in the budding process through its association with lipid rafts during intracellular transport. May additionally display a raft-association independent effect on budding. Plays a role in the determination of host range restriction on replication and virulence. Sialidase activity in late endosome/lysosome traffic seems to enhance virus replication. The polypeptide is Neuraminidase (Aves (Horse)).